The primary structure comprises 152 residues: Xanthine-guanine phosphoribosyltransferase (152 aa).

5-phospho-alpha-D-ribose 1-diphosphate contacts are provided by residues 37-38, arginine 69, and 88-96; these read RG and DDLVDTGGT. Arginine 69 lines the GMP pocket. Residue aspartate 89 participates in Mg(2+) binding. 2 residues coordinate guanine: aspartate 92 and isoleucine 135. Residues aspartate 92 and isoleucine 135 each coordinate xanthine. Residues 92-96 and 134-135 contribute to the GMP site; these read DTGGT and WI.

It belongs to the purine/pyrimidine phosphoribosyltransferase family. XGPT subfamily. As to quaternary structure, homotetramer. Requires Mg(2+) as cofactor.

The protein resides in the cell inner membrane. The enzyme catalyses GMP + diphosphate = guanine + 5-phospho-alpha-D-ribose 1-diphosphate. It catalyses the reaction XMP + diphosphate = xanthine + 5-phospho-alpha-D-ribose 1-diphosphate. It carries out the reaction IMP + diphosphate = hypoxanthine + 5-phospho-alpha-D-ribose 1-diphosphate. Its pathway is purine metabolism; GMP biosynthesis via salvage pathway; GMP from guanine: step 1/1. It participates in purine metabolism; XMP biosynthesis via salvage pathway; XMP from xanthine: step 1/1. Functionally, purine salvage pathway enzyme that catalyzes the transfer of the ribosyl-5-phosphate group from 5-phospho-alpha-D-ribose 1-diphosphate (PRPP) to the N9 position of the 6-oxopurines guanine and xanthine to form the corresponding ribonucleotides GMP (guanosine 5'-monophosphate) and XMP (xanthosine 5'-monophosphate), with the release of PPi. To a lesser extent, also acts on hypoxanthine. The polypeptide is Xanthine-guanine phosphoribosyltransferase (Serratia proteamaculans (strain 568)).